Here is a 396-residue protein sequence, read N- to C-terminus: Tryptophan synthase beta chain (396 aa).

Lysine 86 is subject to N6-(pyridoxal phosphate)lysine.

It belongs to the TrpB family. In terms of assembly, tetramer of two alpha and two beta chains. It depends on pyridoxal 5'-phosphate as a cofactor.

The enzyme catalyses (1S,2R)-1-C-(indol-3-yl)glycerol 3-phosphate + L-serine = D-glyceraldehyde 3-phosphate + L-tryptophan + H2O. It functions in the pathway amino-acid biosynthesis; L-tryptophan biosynthesis; L-tryptophan from chorismate: step 5/5. In terms of biological role, the beta subunit is responsible for the synthesis of L-tryptophan from indole and L-serine. The protein is Tryptophan synthase beta chain of Photobacterium profundum (strain SS9).